The primary structure comprises 188 residues: Ribosome maturation factor RimM (188 aa).

The PRC barrel domain maps to 103-177 (EEGWYYADLI…RVVIDPPAGT (75 aa)).

Belongs to the RimM family. Binds ribosomal protein uS19.

Its subcellular location is the cytoplasm. In terms of biological role, an accessory protein needed during the final step in the assembly of 30S ribosomal subunit, possibly for assembly of the head region. Essential for efficient processing of 16S rRNA. May be needed both before and after RbfA during the maturation of 16S rRNA. It has affinity for free ribosomal 30S subunits but not for 70S ribosomes. This chain is Ribosome maturation factor RimM, found in Parvibaculum lavamentivorans (strain DS-1 / DSM 13023 / NCIMB 13966).